Consider the following 609-residue polypeptide: UvrABC system protein C (609 aa).

Residues 16-94 (SSAGVYRMYD…IKQYMPKYNV (79 aa)) form the GIY-YIG domain. The UVR domain occupies 203-238 (KQVISELVAKMEEAAGQQAYEQAARFRDQIMALRRV).

The protein belongs to the UvrC family. In terms of assembly, interacts with UvrB in an incision complex.

It localises to the cytoplasm. The UvrABC repair system catalyzes the recognition and processing of DNA lesions. UvrC both incises the 5' and 3' sides of the lesion. The N-terminal half is responsible for the 3' incision and the C-terminal half is responsible for the 5' incision. The protein is UvrABC system protein C of Shewanella sp. (strain ANA-3).